We begin with the raw amino-acid sequence, 198 residues long: KinB-signaling pathway activation protein (198 aa).

6 consecutive transmembrane segments (helical) span residues 9–29 (FFFS…FALK), 42–62 (AGQI…FSVI), 90–110 (LQLF…FLFF), 117–137 (LAGY…TAYI), 146–166 (TFVS…FPAL), and 173–193 (WLYL…LMLP).

The protein resides in the cell membrane. Involved in the activation of the KinB signaling pathway of sporulation. This chain is KinB-signaling pathway activation protein (kbaA), found in Bacillus subtilis (strain 168).